The primary structure comprises 279 residues: Urease accessory protein UreD (279 aa).

The protein belongs to the UreD family. In terms of assembly, ureD, UreF and UreG form a complex that acts as a GTP-hydrolysis-dependent molecular chaperone, activating the urease apoprotein by helping to assemble the nickel containing metallocenter of UreC. The UreE protein probably delivers the nickel.

It localises to the cytoplasm. Functionally, required for maturation of urease via the functional incorporation of the urease nickel metallocenter. The polypeptide is Urease accessory protein UreD (Streptococcus salivarius (strain 57.I)).